Consider the following 385-residue polypeptide: Homoserine O-succinyltransferase (385 aa).

The AB hydrolase-1 domain maps to N45 to D355. S151 acts as the Nucleophile in catalysis. A substrate-binding site is contributed by R221. Catalysis depends on residues D316 and H349. Residue D350 coordinates substrate.

Belongs to the AB hydrolase superfamily. MetX family. As to quaternary structure, homodimer.

Its subcellular location is the cytoplasm. The enzyme catalyses L-homoserine + succinyl-CoA = O-succinyl-L-homoserine + CoA. The protein operates within amino-acid biosynthesis; L-methionine biosynthesis via de novo pathway; O-succinyl-L-homoserine from L-homoserine: step 1/1. Functionally, transfers a succinyl group from succinyl-CoA to L-homoserine, forming succinyl-L-homoserine. In Herminiimonas arsenicoxydans, this protein is Homoserine O-succinyltransferase.